The sequence spans 129 residues: Calcitonin gene-related peptide 2 (129 aa).

Positions 1-25 (MGFGKPSSFLAFSILVLCQAGSLQA) are cleaved as a signal peptide. Positions 26–81 (QPLRSSLESLPDPAALSEKEGRLLLAALVKAYVQRKTNELEQEQEQEMEGSSLTAQ) are excised as a propeptide. A disulfide bridge links Cys-85 with Cys-90. A Phenylalanine amide modification is found at Phe-120. The propeptide occupies 126–129 (DLQA).

It belongs to the calcitonin family.

It localises to the secreted. CALCB/CGRP2 is a peptide hormone that induces vasodilation mediated by the CALCRL-RAMP1 receptor complex. Dilates a variety of vessels including the coronary, cerebral and systemic vasculature. Its abundance in the CNS also points toward a neurotransmitter or neuromodulator role. The protein is Calcitonin gene-related peptide 2 (CALCB) of Equus caballus (Horse).